The chain runs to 861 residues: MVNISDFFGKNKKSVRSSTSRPTRQVGSSKPEVIDLDTESDQESTNKTPKKMPVSNVIDVSETPEGEKKLPLPAKRKASSPTVKPASSKKTKPSSKSSDSASNITAQDVLDKIPSLDLSNVHVKENAKFDFKSANSNADPDEIVSEIGSFPEGKPNCLLGLTIVFTGVLPTLERGASEALAKRYGARVTKSISSKTSVVVLGDEAGPKKLEKIKQLKIKAIDEEGFKQLIAGMPAEGGDGEAAEKARRKLEEQHNIATKEAELLVKKEEERSKKLAATRVSGGHLERDNVVREEDKLWTVKYAPTNLQQVCGNKGSVMKLKNWLANWENSKKNSFKHAGKDGSGVFRAAMLYGPPGIGKTTAAHLVAQELGYDILEQNASDVRSKTLLNAGVKNALDNMSVVGYFKHNEEAQNLNGKHFVIIMDEVDGMSGGDRGGVGQLAQFCRKTSTPLILICNERNLPKMRPFDRVCLDIQFRRPDANSIKSRLMTIAIREKFKLDPNVIDRLIQTTRGDIRQVINLLSTISTTTKTINHENINEISKAWEKNIALKPFDIAHKMLDGQIYSDIGSRNFTLNDKIALYFDDFDFTPLMIQENYLSTRPSVLKPGQSHLEAVAEAANCISLGDIVEKKIRSSEQLWSLLPLHAVLSSVYPASKVAGHMAGRINFTAWLGQNSKSAKYYRLLQEIHYHTRLGTSTDKIGLRLDYLPTFRKRLLDPFLKQGADAISSVIEVMDDYYLTKEDWDSIMEFFVGPDVTTAIIKKIPATVKSGFTRKYNSMTHPVAIYRTGSTIGGGGVGTSTSTPDFEDVVDADDNPVPADDEETQDSSTDLKKDKLIKQKAKPTKRKTATSKPGGSKKRKTKA.

Positions 1-103 are disordered; sequence MVNISDFFGK…SSKSSDSASN (103 aa). A compositionally biased stretch (polar residues) spans 16–28; the sequence is RSSTSRPTRQVGS. At Thr-38 the chain carries Phosphothreonine. Ser-40 carries the phosphoserine modification. Thr-63 bears the Phosphothreonine mark. Positions 153–243 constitute a BRCT domain; sequence GKPNCLLGLT…PAEGGDGEAA (91 aa). Residues Thr-299, Cys-311, 353–361, and Asn-456 each bind ATP; that span reads GPPGIGKTT. A disordered region spans residues 788-861; sequence STIGGGGVGT…GGSKKRKTKA (74 aa). A compositionally biased stretch (acidic residues) spans 803 to 823; it reads DFEDVVDADDNPVPADDEETQ. 2 consecutive short sequence motifs (nuclear localization signal) follow at residues 830–834 and 855–860; these read KKDKL and KKRKTK. The span at 836-861 shows a compositional bias: basic residues; the sequence is KQKAKPTKRKTATSKPGGSKKRKTKA.

This sequence belongs to the activator 1 large subunit family. As to quaternary structure, replication factor C (RFC) is a heteropentamer of subunits RFC1, RFC2, RFC3, RFC4 and RFC5 and forms a complex with POL30/PCNA in the presence of ATP. Interacts with ECO1 and POL30/PCNA.

Its subcellular location is the nucleus. Component of the ATP-dependent clamp loader RFC complex for the POL30/PCNA homotrimer DNA clamp. During a clamp loading circle, the RFC:clamp complex binds to DNA and the recognition of the double-stranded/single-stranded junction stimulates ATP hydrolysis by RFC. The complex presumably provides bipartite ATP sites in which one subunit supplies a catalytic site for hydrolysis of ATP bound to the neighboring subunit. Dissociation of RFC from the clamp leaves the clamp encircling DNA. Replication factor C (RFC or activator 1) complex acts during elongation of primed DNA templates by DNA polymerase delta and epsilon. RFC has an essential but redundant activity in sister chromatid cohesion establishment. This chain is Replication factor C subunit 1 (RFC1), found in Saccharomyces cerevisiae (strain ATCC 204508 / S288c) (Baker's yeast).